Consider the following 118-residue polypeptide: Large ribosomal subunit protein bL20 (118 aa).

This sequence belongs to the bacterial ribosomal protein bL20 family.

Functionally, binds directly to 23S ribosomal RNA and is necessary for the in vitro assembly process of the 50S ribosomal subunit. It is not involved in the protein synthesizing functions of that subunit. The sequence is that of Large ribosomal subunit protein bL20 from Azotobacter vinelandii (strain DJ / ATCC BAA-1303).